The chain runs to 354 residues: Ribosomal RNA large subunit methyltransferase M (354 aa).

Residues S183, 216-219, D235, D255, and D271 each bind S-adenosyl-L-methionine; that span reads SPGG. K300 serves as the catalytic Proton acceptor.

This sequence belongs to the class I-like SAM-binding methyltransferase superfamily. RNA methyltransferase RlmE family. RlmM subfamily. In terms of assembly, monomer.

The protein localises to the cytoplasm. The catalysed reaction is cytidine(2498) in 23S rRNA + S-adenosyl-L-methionine = 2'-O-methylcytidine(2498) in 23S rRNA + S-adenosyl-L-homocysteine + H(+). Its function is as follows. Catalyzes the 2'-O-methylation at nucleotide C2498 in 23S rRNA. The protein is Ribosomal RNA large subunit methyltransferase M of Pseudomonas putida (strain ATCC 47054 / DSM 6125 / CFBP 8728 / NCIMB 11950 / KT2440).